A 445-amino-acid polypeptide reads, in one-letter code: Cyclic GMP-AMP phosphodiesterase SMPDL3A (445 aa).

A signal peptide spans 1 to 22 (MALLGNFLCCLLVAWLCGPGLG). Positions 42 and 44 each coordinate Zn(2+). An intrachain disulfide couples C59 to C78. The N-linked (GlcNAc...) asparagine glycan is linked to N66. D107 contacts Zn(2+). H111 is an ATP binding site. The N-linked (GlcNAc...) asparagine glycan is linked to N128. Residue N148 participates in Zn(2+) binding. Positions 148 and 149 each coordinate ATP. Residues N219 and N235 are each glycosylated (N-linked (GlcNAc...) asparagine). H249 is a binding site for Zn(2+). Y257 lines the ATP pocket. The Zn(2+) site is built by H290 and H292. N353 and N364 each carry an N-linked (GlcNAc...) asparagine glycan. Disulfide bonds link C417-C421 and C427-C440.

This sequence belongs to the acid sphingomyelinase family. As to quaternary structure, monomer. Homodimer; homodimerizes following 2',3'-cGAMP-binding. Zn(2+) serves as cofactor. In terms of processing, N-glycosylated. As to expression, detected in blood serum (at protein level).

It localises to the secreted. The enzyme catalyses 2',3'-cGAMP + H2O = 5'-pGpA(2'-5') + H(+). The catalysed reaction is 5'-pGpA(2'-5') + H2O = 5'-GpA(2'-5') + phosphate. It carries out the reaction a ribonucleoside 5'-triphosphate + H2O = a ribonucleoside 5'-diphosphate + phosphate + H(+). It catalyses the reaction ATP + H2O = ADP + phosphate + H(+). Its activity is regulated as follows. Requires micromolar levels of Zn(2+) for activity. Inhibited by millimolar levels of Zn(2+). In terms of biological role, cyclic-nucleotide phosphodiesterase that acts as a negative regulator of innate immunity by mediating degradation of 2',3'-cGAMP, thereby inhibiting the cGAS-STING signaling. Specifically linearizes 2',3'-cGAMP into 2'5'-bond pGpA and further hydrolyzes pGpA to produce GpA. Also has in vitro nucleotide phosphodiesterase activity with nucleoside triphosphates, such as ATP. Has in vitro activity with p-nitrophenyl-TMP. Has lower activity with nucleoside diphosphates, and no activity with nucleoside monophosphates. Has in vitro activity with CDP-choline, giving rise to CMP and phosphocholine. Has in vitro activity with CDP-ethanolamine. Does not have sphingomyelin phosphodiesterase activity. The chain is Cyclic GMP-AMP phosphodiesterase SMPDL3A from Mus musculus (Mouse).